A 284-amino-acid chain; its full sequence is 4-diphosphocytidyl-2-C-methyl-D-erythritol kinase (284 aa).

Lys-14 is a catalytic residue. 98–108 (PMGGGLGGGSS) is an ATP binding site. Residue Asp-140 is part of the active site.

It belongs to the GHMP kinase family. IspE subfamily.

It carries out the reaction 4-CDP-2-C-methyl-D-erythritol + ATP = 4-CDP-2-C-methyl-D-erythritol 2-phosphate + ADP + H(+). Its pathway is isoprenoid biosynthesis; isopentenyl diphosphate biosynthesis via DXP pathway; isopentenyl diphosphate from 1-deoxy-D-xylulose 5-phosphate: step 3/6. Functionally, catalyzes the phosphorylation of the position 2 hydroxy group of 4-diphosphocytidyl-2C-methyl-D-erythritol. The protein is 4-diphosphocytidyl-2-C-methyl-D-erythritol kinase of Shewanella oneidensis (strain ATCC 700550 / JCM 31522 / CIP 106686 / LMG 19005 / NCIMB 14063 / MR-1).